A 485-amino-acid chain; its full sequence is Serine/threonine-protein kinase 4 (485 aa).

One can recognise a Protein kinase domain in the interval 30-281 (FDVLEKLGEG…ATELLQHPFI (252 aa)). ATP contacts are provided by residues 36 to 44 (LGEGSYGSV) and Lys-59. Residue Asp-149 is the Proton acceptor of the active site. Thr-183 is subject to Phosphothreonine; by autocatalysis. An SARAH domain is found at 431-478 (YSFLKDWSVAEVQLKLNSLDPMMEREIEEIHHKYQAKRQPILEAIESK).

It belongs to the protein kinase superfamily. STE Ser/Thr protein kinase family. STE20 subfamily. Homodimer; mediated via the coiled-coil region. The cofactor is Mg(2+). Post-translationally, autophosphorylated on Thr-183. Proteolytically cleaved by caspase-3 during apoptosis at Asp-326 resulting in a 37 kDa form. Proteolytic cleavage results in kinase activation and nuclear translocation of the truncated form (MST1/N).

The protein localises to the cytoplasm. The protein resides in the nucleus. It carries out the reaction L-seryl-[protein] + ATP = O-phospho-L-seryl-[protein] + ADP + H(+). The catalysed reaction is L-threonyl-[protein] + ATP = O-phospho-L-threonyl-[protein] + ADP + H(+). The C-terminal non-catalytic region inhibits the kinase activity, the enzyme is activated by caspase-cleavage. Homodimerization and autophosphorylation of Thr-183 is also required for full activation. Stress-activated, pro-apoptotic kinase which, following caspase-cleavage, enters the nucleus and induces chromatin condensation followed by internucleosomal DNA fragmentation. Key component of the Hippo signaling pathway which plays a pivotal role in organ size control and tumor suppression by restricting proliferation and promoting apoptosis. The core of this pathway is composed of a kinase cascade wherein stk3/mst2 and stk4/mst1, in complex with its regulatory protein sav1, phosphorylates and activates lats1/2 in complex with its regulatory protein mob1, which in turn phosphorylates and inactivates yap1 oncoprotein and wwtr1/taz. Phosphorylation of yap1 by lats2 inhibits its translocation into the nucleus to regulate cellular genes important for cell proliferation, cell death, and cell migration. Phosphorylates 'Ser-14' of histone H2B (H2BS14ph) during apoptosis. The chain is Serine/threonine-protein kinase 4 (stk4) from Xenopus laevis (African clawed frog).